The following is a 419-amino-acid chain: Pregnancy-specific beta-1-glycoprotein 1 (419 aa).

An N-terminal signal peptide occupies residues 1 to 34 (MGTLSAPPCTQRIKWKGLLLTASLLNFWNLPTTA). One can recognise an Ig-like V-type domain in the interval 35–144 (QVTIEAEPTK…TGRFTFTLHL (110 aa)). N-linked (GlcNAc...) asparagine glycosylation is found at Asn-61, Asn-104, Asn-111, Asn-199, Asn-259, Asn-268, and Asn-303. Ig-like C2-type domains follow at residues 149–234 (PSIS…VTLN), 240–327 (PKPY…VTLN), and 335–410 (PRIY…KSMT). Cys-169 and Cys-217 form a disulfide bridge. Cystine bridges form between Cys-262-Cys-310 and Cys-354-Cys-394.

The protein belongs to the immunoglobulin superfamily. CEA family.

It is found in the secreted. The chain is Pregnancy-specific beta-1-glycoprotein 1 (PSG1) from Homo sapiens (Human).